Reading from the N-terminus, the 168-residue chain is Photosystem I assembly protein Ycf3 (168 aa).

3 TPR repeats span residues 35–68 (AFTY…EIDP), 72–105 (SYIL…NPFL), and 120–153 (GEQA…TPGN).

This sequence belongs to the Ycf3 family.

The protein localises to the plastid. It localises to the chloroplast thylakoid membrane. Essential for the assembly of the photosystem I (PSI) complex. May act as a chaperone-like factor to guide the assembly of the PSI subunits. The chain is Photosystem I assembly protein Ycf3 from Piper cenocladum (Ant piper).